The primary structure comprises 253 residues: Ice-binding protein (253 aa).

The N-terminal stretch at 1 to 27 (MKTLISNSKKVLIPLIMGSIFAGNVMA) is a signal peptide. A disulfide bridge links Cys75 with Cys93. Short sequence motifs (ice-binding site motif (T-A/G-X-T/N)) lie at residues 220–223 (TGTT) and 232–235 (TAVT).

Belongs to the ice-binding protein family.

It is found in the secreted. Functionally, binds to the surface of ice crystals and inhibits their growth. Has ice recrystallization inhibition (RI) activity (the ability to prevent the formation of larger grains of ice at the expense of smaller grains), which may protect membranes from freezing injury. Has high thermal hysteresis (TH) activity, which is the ability to lower the freezing point of an aqueous solution below its melting point, and thus the freezing of the cell fluid can be prevented protecting the organism from ice damage. The TH activity of this protein is 3.8 degrees Celsius at 14 mM. This chain is Ice-binding protein, found in Colwellia sp.